The chain runs to 114 residues: Kininogen-2 (114 aa).

An N-terminal signal peptide occupies residues 1–23; it reads MRLWFCLSFFIVLCLEHFPGTLA. Positions 35–45 are enriched in basic residues; it reads TRLHGHHKPSR. The interval 35–114 is disordered; it reads TRLHGHHKPS…QIPGLGPLRG (80 aa). The span at 65-80 shows a compositional bias: basic and acidic residues; sequence PESEEKTEQFLRDLPK. Arginine amide is present on Arg113.

It belongs to the bradykinin-related peptide family. In terms of tissue distribution, expressed by the skin glands.

The protein resides in the secreted. Functionally, potent vasodilator. Binds B1 (BDKRB1) and B2 (BDKRB2) bradykinin receptors. This is Kininogen-2 from Bombina maxima (Giant fire-bellied toad).